The primary structure comprises 269 residues: GTP cyclohydrolase FolE2 (269 aa).

It belongs to the GTP cyclohydrolase IV family.

It carries out the reaction GTP + H2O = 7,8-dihydroneopterin 3'-triphosphate + formate + H(+). It functions in the pathway cofactor biosynthesis; 7,8-dihydroneopterin triphosphate biosynthesis; 7,8-dihydroneopterin triphosphate from GTP: step 1/1. Its function is as follows. Converts GTP to 7,8-dihydroneopterin triphosphate. This chain is GTP cyclohydrolase FolE2, found in Azoarcus sp. (strain BH72).